Consider the following 1013-residue polypeptide: Trehalose monomycolate exporter MmpL3 (1013 aa).

At 1 to 14 (MFAWWGRTVYQFRY) the chain is on the cytoplasmic side. A helical transmembrane segment spans residues 15–35 (IVIGVMVALCLGGGVYGISLG). The Periplasmic portion of the chain corresponds to 36-196 (NHVTQSGFYD…KRAEVAAIPL (161 aa)). Position 40–44 (40–44 (QSGFY)) interacts with a 1,2-diacylglycero-3-phosphoethanolamine. Helical transmembrane passes span 197-217 (VAVV…PAII) and 218-238 (GGLA…FTPV). Residues 239 to 240 (HF) are Periplasmic-facing. The helical transmembrane segment at 241–261 (FAQPVVTLIGLGIAIDYGLFI) threads the bilayer. Topologically, residues 262–290 (VSRFREEIAEGYDTEAAVRRTVMTSGRTV) are cytoplasmic. A helical transmembrane segment spans residues 291–311 (VFSAVIIVASSVPLLLFPQGF). Residues 312–317 (LKSITY) lie on the Periplasmic side of the membrane. Residues 318–338 (AIIASVMLAAILSITVLAAAL) traverse the membrane as a helical segment. At 339–401 (AILGPRVDAL…RLVNVVMKRP (63 aa)) the chain is on the cytoplasmic side. A helical transmembrane segment spans residues 402–422 (IAFAAPILVVMVLLIIPLGQL). Residues 423-567 (SLGGISEKYL…HSLFDKLPLM (145 aa)) are Periplasmic-facing. Residues 485–513 (SGFTDPDNDPEKMWKERPANDSGSKDPSV) form a disordered region. Positions 493–512 (DPEKMWKERPANDSGSKDPS) are enriched in basic and acidic residues. The helical transmembrane segment at 568–588 (ALILIVTTTVLMFLAFGSVVL) threads the bilayer. Residues 589–591 (PIK) are Cytoplasmic-facing. A helical transmembrane segment spans residues 592–612 (AALMSALTLGSTMGILTWMFV). The Periplasmic portion of the chain corresponds to 613–630 (DGHGSGLMNYTPQPLMAP). A helical transmembrane segment spans residues 631–651 (MIGLIIAVIWGLSTDYEVFLV). Asp-645 contributes to the SQ109 binding site. Over 652 to 678 (SRMVEARERGMSTAEAIRIGTATTGRL) the chain is Cytoplasmic. A helical membrane pass occupies residues 679–699 (ITGAALILAVVAGAFVFSDLV). At 700–703 (MMKY) the chain is on the periplasmic side. A helical membrane pass occupies residues 704–724 (LAFGLLIALLLDATIIRMFLV). At 725–1013 (PAVMKLLGDD…QDLLRREGRL (289 aa)) the chain is on the cytoplasmic side. The segment at 754-1013 (TELPDERKRP…QDLLRREGRL (260 aa)) is disordered. Residues 757–772 (PDERKRPTVRESETDQ) show a composition bias toward basic and acidic residues. Pro residues-rich tracts occupy residues 792–803 (HPAPEPVRPMPP) and 820–829 (PPQPPQPPQA). Residues 842–867 (RFAMARNAVRNAVNSAVHGGAGSAAA) show a composition bias toward low complexity. Pro residues predominate over residues 875-885 (PGGPAQPPAPP). Residues 973–996 (REQEPSTEKLNTREDAPEDPETKR) are compositionally biased toward basic and acidic residues.

This sequence belongs to the resistance-nodulation-cell division (RND) (TC 2.A.6) family. MmpL subfamily. In terms of assembly, monomer. Interacts with TtfA (via N-terminus); active trehalose monomycolate (TMM) biosynthesis is not required for the complex formation. Interacts with MSMEG_5308.

It is found in the cell inner membrane. The protein resides in the cell septum. Its subcellular location is the cell tip. With respect to regulation, inhibited by the antimycobacterial compound BM212, a pyrrole derivative. Inhibited by the antitubercular drug SQ109. Inhibited by the adamantyl urea derivative AU1235, the indole carboxamide ICA38 and rimonabant, the antagonist for the cannabinoid receptor CB1. The dissociation constant (Kd) values for SQ109, AU1235, ICA38 and rimonabant are 1.65 uM, 0.29, 0.16 and 29.5, respectively. Inhibitory effects are due to binding of the inhibitors at the proton-transportation channel most likely dissipating the transmembrane electrochemical proton gradient needed for substrate translocation. Functionally, transports trehalose monomycolate (TMM) to the cell wall. Flips TMM across the inner membrane. Membrane potential is not required for this function. Transports probably phosphatidylethanolamine (PE) as well. Binds specifically both TMM and PE, but not trehalose dimycolate (TDM). Also binds diacylglycerol (DAG) and other phospholipids, including phosphatidylglycerol (PG), phosphatidylinositol (PI), and cardiolipin (CDL). Contributes to membrane potential, cell wall composition, antibiotic susceptibility and fitness. In Mycolicibacterium smegmatis (strain ATCC 700084 / mc(2)155) (Mycobacterium smegmatis), this protein is Trehalose monomycolate exporter MmpL3.